The sequence spans 338 residues: UbiA prenyltransferase domain-containing protein 1 (338 aa).

Position 2 is an N-acetylalanine (alanine 2). The next 8 membrane-spanning stretches (helical) occupy residues 83-103 (LLVGCAVAVLAVHGAGNLVNT), 134-154 (FGVFLYTLGCVCAACLYYLSP), 160-180 (LALIYFGGLSGSFLYTGGIGF), 188-208 (LIILITFGPLAVMFAYAIQVG), 209-229 (SLAIFPLVYAIPLALSTEAIL), 245-267 (IVTLAILIGPTFSYILYNTLLFL), 277-297 (THCTISLALPLLTIPMAFSLE), and 315-335 (LNLLLGLFYVFGIILAPAGSL).

Belongs to the UbiA prenyltransferase family. In terms of assembly, interacts with HMGCR and SOAT1. As to expression, ubiquitously expressed.

The protein localises to the endoplasmic reticulum membrane. It localises to the golgi apparatus membrane. It is found in the mitochondrion membrane. Its subcellular location is the cytoplasm. The protein resides in the nucleus. It catalyses the reaction menadiol + (2E,6E,10E)-geranylgeranyl diphosphate = menaquinol-4 + diphosphate. The enzyme catalyses all-trans-decaprenyl diphosphate + 4-hydroxybenzoate = 4-hydroxy-3-(all-trans-decaprenyl)benzoate + diphosphate. It functions in the pathway quinol/quinone metabolism; menaquinone biosynthesis. It participates in cofactor biosynthesis; ubiquinone biosynthesis. In terms of biological role, prenyltransferase that mediates the formation of menaquinone-4 (MK-4) and coenzyme Q10. MK-4 is a vitamin K2 isoform present at high concentrations in the brain, kidney and pancreas, and is required for endothelial cell development. Mediates the conversion of phylloquinone (PK) into MK-4, probably by cleaving the side chain of phylloquinone (PK) to release 2-methyl-1,4-naphthoquinone (menadione; K3) and then prenylating it with geranylgeranyl pyrophosphate (GGPP) to form MK-4. Also plays a role in cardiovascular development independently of MK-4 biosynthesis, by acting as a coenzyme Q10 biosynthetic enzyme: coenzyme Q10, also named ubiquinone, plays an important antioxidant role in the cardiovascular system. Mediates biosynthesis of coenzyme Q10 in the Golgi membrane, leading to protect cardiovascular tissues from NOS3/eNOS-dependent oxidative stress. This Homo sapiens (Human) protein is UbiA prenyltransferase domain-containing protein 1.